The following is a 379-amino-acid chain: Cytochrome b (379 aa).

Helical transmembrane passes span 33–53, 77–98, 113–133, and 178–198; these read FGSL…FLAM, WTIR…FIHV, WNVG…GYVL, and FFAL…IHLL. The heme b site is built by His83 and His97. Residues His182 and His196 each contribute to the heme b site. His201 provides a ligand contact to a ubiquinone. 4 consecutive transmembrane segments (helical) span residues 226-246, 288-308, 320-340, and 347-367; these read TKDF…ALFY, LGGV…PFLQ, LSQF…WIGG, and FINI…FIMP.

This sequence belongs to the cytochrome b family. As to quaternary structure, the cytochrome bc1 complex contains 11 subunits: 3 respiratory subunits (MT-CYB, CYC1 and UQCRFS1), 2 core proteins (UQCRC1 and UQCRC2) and 6 low-molecular weight proteins (UQCRH/QCR6, UQCRB/QCR7, UQCRQ/QCR8, UQCR10/QCR9, UQCR11/QCR10 and a cleavage product of UQCRFS1). This cytochrome bc1 complex then forms a dimer. It depends on heme b as a cofactor.

The protein localises to the mitochondrion inner membrane. In terms of biological role, component of the ubiquinol-cytochrome c reductase complex (complex III or cytochrome b-c1 complex) that is part of the mitochondrial respiratory chain. The b-c1 complex mediates electron transfer from ubiquinol to cytochrome c. Contributes to the generation of a proton gradient across the mitochondrial membrane that is then used for ATP synthesis. The sequence is that of Cytochrome b (MT-CYB) from Lepilemur ankaranensis (Ankarana sportive lemur).